The following is a 390-amino-acid chain: MRYITAGESHGPQLTTIIEGVPAGLPLVADDINEELARRQKGYGRGRRMQIETDQVQIVSGVRHGETLGSPIALVVENRDFAHWTKIMGAEPLTEQEEKEMKRKVTKPRPGHADLNGAIKYGHRDMRNVLERSSARETTVRVAAGAVAKKVLAELGIAVAGHVIEIGGVQAKETTYRSIEELKSITEASPVRCLDEEAGNQMIKAIDDAKSNGDSIGGIVEVIVEGMPIGVGSYVHYDRKLDAKLAAAIMSINAFKGVEIGIGFEAAHRPGSEVHDEILWDEEHGYTRRTNNAGGLEGGMTTGMPIVVRGVMKPIPTLYKPLQSVDIDTKEPFTASIERSDSCAVPAASVVAEAVVAWELATALIEQFGLDRMDLIRENIEKHNEYARGF.

NADP(+) is bound by residues Arg-39 and Arg-45. The segment at 95 to 117 is disordered; sequence EQEEKEMKRKVTKPRPGHADLNG. FMN contacts are provided by residues 132 to 134, 253 to 254, Gly-298, 313 to 317, and Arg-339; these read RSS, NA, and KPIPT.

Belongs to the chorismate synthase family. In terms of assembly, homotetramer. FMNH2 serves as cofactor.

It carries out the reaction 5-O-(1-carboxyvinyl)-3-phosphoshikimate = chorismate + phosphate. Its pathway is metabolic intermediate biosynthesis; chorismate biosynthesis; chorismate from D-erythrose 4-phosphate and phosphoenolpyruvate: step 7/7. Catalyzes the anti-1,4-elimination of the C-3 phosphate and the C-6 proR hydrogen from 5-enolpyruvylshikimate-3-phosphate (EPSP) to yield chorismate, which is the branch point compound that serves as the starting substrate for the three terminal pathways of aromatic amino acid biosynthesis. This reaction introduces a second double bond into the aromatic ring system. This is Chorismate synthase 1 from Bacillus cereus (strain ZK / E33L).